The chain runs to 208 residues: Uracil phosphoribosyltransferase (208 aa).

Residues Arg78, Arg103, and 130–138 (DPMLATGGS) each bind 5-phospho-alpha-D-ribose 1-diphosphate. Residues Ile193 and 198–200 (GDA) each bind uracil. Position 199 (Asp199) interacts with 5-phospho-alpha-D-ribose 1-diphosphate.

This sequence belongs to the UPRTase family. Requires Mg(2+) as cofactor.

It catalyses the reaction UMP + diphosphate = 5-phospho-alpha-D-ribose 1-diphosphate + uracil. It participates in pyrimidine metabolism; UMP biosynthesis via salvage pathway; UMP from uracil: step 1/1. Allosterically activated by GTP. In terms of biological role, catalyzes the conversion of uracil and 5-phospho-alpha-D-ribose 1-diphosphate (PRPP) to UMP and diphosphate. In Photorhabdus laumondii subsp. laumondii (strain DSM 15139 / CIP 105565 / TT01) (Photorhabdus luminescens subsp. laumondii), this protein is Uracil phosphoribosyltransferase.